The following is a 288-amino-acid chain: Bifunctional protein FolD (288 aa).

NADP(+)-binding positions include 166 to 168 (GAS) and Ile232.

It belongs to the tetrahydrofolate dehydrogenase/cyclohydrolase family. As to quaternary structure, homodimer.

It catalyses the reaction (6R)-5,10-methylene-5,6,7,8-tetrahydrofolate + NADP(+) = (6R)-5,10-methenyltetrahydrofolate + NADPH. The enzyme catalyses (6R)-5,10-methenyltetrahydrofolate + H2O = (6R)-10-formyltetrahydrofolate + H(+). It functions in the pathway one-carbon metabolism; tetrahydrofolate interconversion. In terms of biological role, catalyzes the oxidation of 5,10-methylenetetrahydrofolate to 5,10-methenyltetrahydrofolate and then the hydrolysis of 5,10-methenyltetrahydrofolate to 10-formyltetrahydrofolate. The polypeptide is Bifunctional protein FolD (Salmonella heidelberg (strain SL476)).